The chain runs to 359 residues: MNILTPVADRLPSREEAEEALAVLRRWAKHTPVSDVAGLAPDVPALVYPEFSRSYPRNFTVDEAYKASLPDLQNGPASLIVGAKAVIQHVGISNFRLPIRYHTRDNGDLTLETSVTGTVSLEAEKKGINMSRIMRSFYAHAEQGFSFEVIERALEDYKRDLESFDARIQMRFSFPVKVPSLRSGLVGWQYYDIALELVDRGGVRKKIMHLDFVYSSTCPCSLELSEHARRERGQLATPHSQRSVARISVEVRPGKCLWFEDLIELARAAVPTETQVMVKREDEQAFAELNAANPIFVEDAARSFCQALQADPRIGDFRVVASHQESLHSHDAVSVLTEGPTFAAESLDPRLFASLYHTG.

This sequence belongs to the GTP cyclohydrolase IV family.

It carries out the reaction GTP + H2O = 7,8-dihydroneopterin 3'-triphosphate + formate + H(+). Its pathway is cofactor biosynthesis; 7,8-dihydroneopterin triphosphate biosynthesis; 7,8-dihydroneopterin triphosphate from GTP: step 1/1. Its function is as follows. Converts GTP to 7,8-dihydroneopterin triphosphate. The protein is GTP cyclohydrolase FolE2 of Cereibacter sphaeroides (strain ATCC 17025 / ATH 2.4.3) (Rhodobacter sphaeroides).